The sequence spans 981 residues: Ubiquitin carboxyl-terminal hydrolase 15 (981 aa).

The residue at position 2 (A2) is an N-acetylalanine. Residues 2–223 (AEGGAADLDT…KNEDGTWPRG (222 aa)) form a mediates interaction with SART3 region. Residues 7–118 (ADLDTQRSDI…GQEPIARKVV (112 aa)) form the DUSP domain. Positions 216–237 (EDGTWPRGPSTPKSPGASNFST) are disordered. Residue T226 is modified to Phosphothreonine. A compositionally biased stretch (polar residues) spans 226–237 (TPKSPGASNFST). S229 and S242 each carry phosphoserine. In terms of domain architecture, USP spans 289–933 (CGLSNLGNTC…AAYVLFYQRQ (645 aa)). C298 acts as the Nucleophile in catalysis. T602 carries the post-translational modification Phosphothreonine. Residues 633–694 (CCEDQNINGN…GGDNDSENGL (62 aa)) are disordered. Acidic residues predominate over residues 656–673 (METDEPDDESSQDQELPS). H891 functions as the Proton acceptor in the catalytic mechanism. Residues 952-981 (SAATGIPLESDEDSNDNDNDLENENCMHTN) form a disordered region. Residues 960–974 (ESDEDSNDNDNDLEN) show a composition bias toward acidic residues. Residues S961 and S965 each carry the phosphoserine modification.

The protein belongs to the peptidase C19 family. As to quaternary structure, a homodimer structure has been reported; however it is unclear whether the protein form a homodimer in vivo. Identified in a complex with the COP9 signalosome complex (CSN). Interacts with SMAD1, SMAD2 and SMAD3; the interaction is direct. Forms a complex with SMURF2 and SMAD7. Interacts with TGFBR1. Interacts with SART3; the interaction is direct. May interact with RNF20 and RNF40. May interact with PRKN. Interacts with INCA1. Phosphorylated. Phosphorylation protects against ubiquitination and subsequent degradation by the proteasome. Post-translationally, ubiquitinated, leading to degradation by the proteasome. As to expression, widely expressed with highest levels in the brain and spleen, and lowest levels in the muscles (at protein level). In the midbrain, strong expression in neurons including the dopaminergic neurons (at protein level). Widely expressed with highest levels in testis, heart and liver.

Its subcellular location is the cytoplasm. The protein resides in the nucleus. It localises to the mitochondrion. The catalysed reaction is Thiol-dependent hydrolysis of ester, thioester, amide, peptide and isopeptide bonds formed by the C-terminal Gly of ubiquitin (a 76-residue protein attached to proteins as an intracellular targeting signal).. Hydrolase that removes conjugated ubiquitin from target proteins and regulates various pathways such as the TGF-beta receptor signaling, NF-kappa-B and RNF41/NRDP1-PRKN pathways. Acts as a key regulator of TGF-beta receptor signaling pathway, but the precise mechanism is still unclear: according to a report, acts by promoting deubiquitination of monoubiquitinated R-SMADs (SMAD1, SMAD2 and/or SMAD3), thereby alleviating inhibition of R-SMADs and promoting activation of TGF-beta target genes. According to another reports, regulates the TGF-beta receptor signaling pathway by mediating deubiquitination and stabilization of TGFBR1, leading to an enhanced TGF-beta signal. Able to mediate deubiquitination of monoubiquitinated substrates, 'Lys-27'-, 'Lys-48'- and 'Lys-63'-linked polyubiquitin chains. May also regulate gene expression and/or DNA repair through the deubiquitination of histone H2B. Acts as an inhibitor of mitophagy by counteracting the action of parkin (PRKN): hydrolyzes cleavage of 'Lys-48'- and 'Lys-63'-linked polyubiquitin chains attached by parkin on target proteins such as MFN2, thereby reducing parkin's ability to drive mitophagy. Acts as an associated component of COP9 signalosome complex (CSN) and regulates different pathways via this association: regulates NF-kappa-B by mediating deubiquitination of NFKBIA and deubiquitinates substrates bound to VCP. Involved in endosome organization by mediating deubiquitination of SQSTM1: ubiquitinated SQSTM1 forms a molecular bridge that restrains cognate vesicles in the perinuclear region and its deubiquitination releases target vesicles for fast transport into the cell periphery. Acts as a negative regulator of antifungal immunity by mediating 'Lys-27'-linked deubiquitination of CARD9, thereby inactivating CARD9. This Mus musculus (Mouse) protein is Ubiquitin carboxyl-terminal hydrolase 15 (Usp15).